The primary structure comprises 258 residues: Tryptophan synthase alpha chain (258 aa).

Residues glutamate 52 and aspartate 63 each act as proton acceptor in the active site.

The protein belongs to the TrpA family. As to quaternary structure, tetramer of two alpha and two beta chains.

The catalysed reaction is (1S,2R)-1-C-(indol-3-yl)glycerol 3-phosphate + L-serine = D-glyceraldehyde 3-phosphate + L-tryptophan + H2O. The protein operates within amino-acid biosynthesis; L-tryptophan biosynthesis; L-tryptophan from chorismate: step 5/5. Functionally, the alpha subunit is responsible for the aldol cleavage of indoleglycerol phosphate to indole and glyceraldehyde 3-phosphate. The sequence is that of Tryptophan synthase alpha chain from Streptococcus pneumoniae serotype 19F (strain G54).